Reading from the N-terminus, the 413-residue chain is Tyrosine--tRNA ligase (413 aa).

Positions 55-64 (PTRPDLHLGH) match the 'HIGH' region motif. The 'KMSKS' region motif lies at 242-246 (KMSKS). Lys245 is a binding site for ATP. The S4 RNA-binding domain occupies 346–410 (VKLSYILREC…GKKAFRRLVK (65 aa)).

The protein belongs to the class-I aminoacyl-tRNA synthetase family. TyrS type 2 subfamily. As to quaternary structure, homodimer.

The protein resides in the cytoplasm. The catalysed reaction is tRNA(Tyr) + L-tyrosine + ATP = L-tyrosyl-tRNA(Tyr) + AMP + diphosphate + H(+). Functionally, catalyzes the attachment of tyrosine to tRNA(Tyr) in a two-step reaction: tyrosine is first activated by ATP to form Tyr-AMP and then transferred to the acceptor end of tRNA(Tyr). In Synechococcus sp. (strain JA-2-3B'a(2-13)) (Cyanobacteria bacterium Yellowstone B-Prime), this protein is Tyrosine--tRNA ligase.